The chain runs to 117 residues: UPF0295 protein YgzB (117 aa).

2 helical membrane-spanning segments follow: residues 13–33 (TFAL…IFFK) and 41–61 (LFMI…FWIG).

This sequence belongs to the UPF0295 family.

Its subcellular location is the cell membrane. This Bacillus subtilis (strain 168) protein is UPF0295 protein YgzB (ygzB).